We begin with the raw amino-acid sequence, 189 residues long: Peptidyl-tRNA hydrolase (189 aa).

Y15 contacts tRNA. H20 (proton acceptor) is an active-site residue. 3 residues coordinate tRNA: F66, N68, and N114.

Belongs to the PTH family. Monomer.

The protein resides in the cytoplasm. It catalyses the reaction an N-acyl-L-alpha-aminoacyl-tRNA + H2O = an N-acyl-L-amino acid + a tRNA + H(+). In terms of biological role, hydrolyzes ribosome-free peptidyl-tRNAs (with 1 or more amino acids incorporated), which drop off the ribosome during protein synthesis, or as a result of ribosome stalling. Functionally, catalyzes the release of premature peptidyl moieties from peptidyl-tRNA molecules trapped in stalled 50S ribosomal subunits, and thus maintains levels of free tRNAs and 50S ribosomes. The sequence is that of Peptidyl-tRNA hydrolase from Streptococcus pyogenes serotype M1.